The primary structure comprises 153 residues: Ubiquitin-conjugating enzyme E2 ubc-18 (153 aa).

The 148-residue stretch at 2-149 (SATRRLQKEL…AEEHTRKHAE (148 aa)) folds into the UBC core domain. The Glycyl thioester intermediate role is filled by Cys86.

This sequence belongs to the ubiquitin-conjugating enzyme family. In terms of assembly, interacts with E3 ubiquitin-protein ligase wwp-1. Interacts with RBR-type E3 ubiquitin transferase ari-1.1. Expressed in neurons localized in the head and tail of adults.

The enzyme catalyses S-ubiquitinyl-[E1 ubiquitin-activating enzyme]-L-cysteine + [E2 ubiquitin-conjugating enzyme]-L-cysteine = [E1 ubiquitin-activating enzyme]-L-cysteine + S-ubiquitinyl-[E2 ubiquitin-conjugating enzyme]-L-cysteine.. Its function is as follows. Ubiquitin-conjugating enzyme E2. Accepts ubiquitin from the E1 complex and catalyzes its covalent attachment to other proteins. Required for diet restriction-mediated lifespan extension, probably acting as part of a complex with ubiquitin-protein ligase wwp-1. Acts redundantly with lin-35/Rb in the regulation of pharyngeal morphogenesis during embryonic development by negatively regulating the expression of proteins such as sup-35. This Caenorhabditis elegans protein is Ubiquitin-conjugating enzyme E2 ubc-18.